A 340-amino-acid chain; its full sequence is Protein RecA (340 aa).

65-72 (GPESGGKT) lines the ATP pocket.

The protein belongs to the RecA family.

The protein resides in the cytoplasm. In terms of biological role, can catalyze the hydrolysis of ATP in the presence of single-stranded DNA, the ATP-dependent uptake of single-stranded DNA by duplex DNA, and the ATP-dependent hybridization of homologous single-stranded DNAs. It interacts with LexA causing its activation and leading to its autocatalytic cleavage. This chain is Protein RecA, found in Thermus thermophilus (strain ATCC BAA-163 / DSM 7039 / HB27).